A 219-amino-acid polypeptide reads, in one-letter code: ER lumen protein-retaining receptor (219 aa).

Over 1–3 (MLN) the chain is Lumenal. The chain crosses the membrane as a helical span at residues 4 to 22 (VFRIAGDFSHLASIIILIQ). Topologically, residues 23-36 (SITTSNSVDGISLK) are cytoplasmic. A helical membrane pass occupies residues 37-54 (TQLLYTLVFITRYLNLFT). Over 55 to 62 (KWTSLYNF) the chain is Lumenal. A helical transmembrane segment spans residues 63-82 (LMKIVFISSSVYVIVLMRQQ). At 83 to 102 (KFKNPVAYQDMITRDQFKIK) the chain is on the cytoplasmic side. The chain crosses the membrane as a helical span at residues 103 to 116 (FLIVPCILLGLIFN). Over 117 to 123 (YRFSFIQ) the chain is Lumenal. A helical membrane pass occupies residues 124–143 (ICWSFSLWLESVAILPQLFM). Over 144 to 155 (LTKTGKAKQLTS) the chain is Cytoplasmic. A helical transmembrane segment spans residues 156–174 (HYIFALGLYRALYIPNWIW). Residues 175-184 (RYYTEERFDK) are Lumenal-facing. A helical membrane pass occupies residues 185 to 205 (LSVFTGVIQTLVYSDFFYIYY). Topologically, residues 206–219 (QKVIKLGGDLELPQ) are cytoplasmic.

The protein belongs to the ERD2 family.

The protein localises to the endoplasmic reticulum membrane. Its function is as follows. Required for the retention of luminal endoplasmic reticulum proteins. Determines the specificity of the luminal ER protein retention system. Also required for normal vesicular traffic through the Golgi. This receptor recognizes H-D-E-L and D-D-E-L, but not K-D-E-L. The protein is ER lumen protein-retaining receptor (ERD2) of Kluyveromyces lactis (strain ATCC 8585 / CBS 2359 / DSM 70799 / NBRC 1267 / NRRL Y-1140 / WM37) (Yeast).